The following is a 245-amino-acid chain: Protein crossbronx (245 aa).

In terms of domain architecture, UBC core spans 20-177 (HQEYKILAEY…VQESIAESKA (158 aa)).

Belongs to the ubiquitin-conjugating enzyme family. FTS subfamily.

This Drosophila mojavensis (Fruit fly) protein is Protein crossbronx (cbx).